Consider the following 207-residue polypeptide: 3-demethoxyubiquinol 3-hydroxylase (207 aa).

The span at 22 to 32 (ERANPADRLAP) shows a compositional bias: basic and acidic residues. Residues 22 to 41 (ERANPADRLAPETEQMNPEE) form a disordered region. The Fe cation site is built by Glu56, Glu86, His89, Glu138, Glu170, and His173.

The protein belongs to the COQ7 family. Fe cation serves as cofactor.

Its subcellular location is the cell membrane. The catalysed reaction is a 5-methoxy-2-methyl-3-(all-trans-polyprenyl)benzene-1,4-diol + AH2 + O2 = a 3-demethylubiquinol + A + H2O. The protein operates within cofactor biosynthesis; ubiquinone biosynthesis. Catalyzes the hydroxylation of 2-nonaprenyl-3-methyl-6-methoxy-1,4-benzoquinol during ubiquinone biosynthesis. This chain is 3-demethoxyubiquinol 3-hydroxylase, found in Cupriavidus metallidurans (strain ATCC 43123 / DSM 2839 / NBRC 102507 / CH34) (Ralstonia metallidurans).